The sequence spans 459 residues: Cysteine--tRNA ligase (459 aa).

C28 contacts Zn(2+). Residues 30-40 (VTVYDLCHFGH) carry the 'HIGH' region motif. Residues C209, H234, and E238 each contribute to the Zn(2+) site. The 'KMSKS' region motif lies at 266-270 (KMSKS). K269 serves as a coordination point for ATP.

The protein belongs to the class-I aminoacyl-tRNA synthetase family. Monomer. Zn(2+) is required as a cofactor.

The protein localises to the cytoplasm. It carries out the reaction tRNA(Cys) + L-cysteine + ATP = L-cysteinyl-tRNA(Cys) + AMP + diphosphate. The chain is Cysteine--tRNA ligase from Actinobacillus succinogenes (strain ATCC 55618 / DSM 22257 / CCUG 43843 / 130Z).